A 312-amino-acid polypeptide reads, in one-letter code: Very-long-chain 3-oxoacyl-CoA reductase (312 aa).

A helical membrane pass occupies residues 4–24 (APPAAGFLYWVGASTIAYLAL). 50–79 (GEWAVVTGGTDGIGKAYAEELAKRGMKIVL) lines the NADP(+) pocket. Helical transmembrane passes span 182–202 (GVIL…LTIY) and 269–285 (TTGY…NSIM). Substrate is bound at residue Ser189. Catalysis depends on Tyr202, which acts as the Proton acceptor. Positions 308 to 312 (KRKKN) match the Di-lysine motif motif.

Belongs to the short-chain dehydrogenases/reductases (SDR) family. 17-beta-HSD 3 subfamily. Expressed in most tissues tested.

It is found in the endoplasmic reticulum membrane. It carries out the reaction a very-long-chain (3R)-3-hydroxyacyl-CoA + NADP(+) = a very-long-chain 3-oxoacyl-CoA + NADPH + H(+). The catalysed reaction is 17beta-estradiol + NAD(+) = estrone + NADH + H(+). The enzyme catalyses 17beta-estradiol + NADP(+) = estrone + NADPH + H(+). It catalyses the reaction 3-oxooctadecanoyl-CoA + NADPH + H(+) = (3R)-hydroxyoctadecanoyl-CoA + NADP(+). It carries out the reaction (7Z,10Z,13Z,16Z)-3-oxodocosatetraenoyl-CoA + NADPH + H(+) = (3R)-hydroxy-(7Z,10Z,13Z,16Z)-docosatetraenoyl-CoA + NADP(+). The catalysed reaction is 3-oxo-(7Z,10Z,13Z,16Z,19Z)-docosapentaenoyl-CoA + NADPH + H(+) = (3R)-hydroxy-(7Z,10Z,13Z,16Z,19Z)-docosapentaenoyl-CoA + NADP(+). The enzyme catalyses (8Z,11Z,14Z)-3-oxoeicosatrienoyl-CoA + NADPH + H(+) = (3R)-hydroxy-(8Z,11Z,14Z)-eicosatrienoyl-CoA + NADP(+). Its pathway is lipid metabolism; fatty acid biosynthesis. The protein operates within steroid biosynthesis; estrogen biosynthesis. Its function is as follows. Catalyzes the second of the four reactions of the long-chain fatty acids elongation cycle. This endoplasmic reticulum-bound enzymatic process, allows the addition of two carbons to the chain of long- and very long-chain fatty acids/VLCFAs per cycle. This enzyme has a 3-ketoacyl-CoA reductase activity, reducing 3-ketoacyl-CoA to 3-hydroxyacyl-CoA, within each cycle of fatty acid elongation. Thereby, it may participate in the production of VLCFAs of different chain lengths that are involved in multiple biological processes as precursors of membrane lipids and lipid mediators. May also catalyze the transformation of estrone (E1) into estradiol (E2) and play a role in estrogen formation. The sequence is that of Very-long-chain 3-oxoacyl-CoA reductase from Mus musculus (Mouse).